We begin with the raw amino-acid sequence, 343 residues long: Protein RecA (343 aa).

66–73 (GPESSGKT) provides a ligand contact to ATP.

Belongs to the RecA family.

The protein localises to the cytoplasm. In terms of biological role, can catalyze the hydrolysis of ATP in the presence of single-stranded DNA, the ATP-dependent uptake of single-stranded DNA by duplex DNA, and the ATP-dependent hybridization of homologous single-stranded DNAs. It interacts with LexA causing its activation and leading to its autocatalytic cleavage. This chain is Protein RecA, found in Rickettsia bellii (strain OSU 85-389).